The chain runs to 602 residues: 3-hydroxy-3-methylglutaryl-coenzyme A reductase 2 (602 aa).

2 consecutive transmembrane segments (helical) span residues 44-67 (ASDALPLPLYLTTNGLFFTMFFSV) and 95-115 (AIVSLIASVIYLLGFFGIGFV). Positions 116-187 (QTFVSRGNND…PLITSASSGE (72 aa)) are linker. Asn124 carries N-linked (GlcNAc...) asparagine glycosylation. Residues 188 to 602 (DEEIIKSVVQ…STKDVTKASS (415 aa)) form a catalytic region. Glu281 functions as the Charge relay system in the catalytic mechanism. N-linked (GlcNAc...) asparagine glycosylation is present at Asn345. Catalysis depends on Lys413, which acts as the Charge relay system. N-linked (GlcNAc...) asparagine glycosylation is present at Asn458. Asp489 acts as the Charge relay system in catalysis. The Proton donor role is filled by His587. An N-linked (GlcNAc...) asparagine glycan is attached at Asn591.

Belongs to the HMG-CoA reductase family.

It localises to the endoplasmic reticulum membrane. It carries out the reaction (R)-mevalonate + 2 NADP(+) + CoA = (3S)-3-hydroxy-3-methylglutaryl-CoA + 2 NADPH + 2 H(+). Its pathway is metabolic intermediate biosynthesis; (R)-mevalonate biosynthesis; (R)-mevalonate from acetyl-CoA: step 3/3. Its function is as follows. Catalyzes the synthesis of mevalonate. The specific precursor of all isoprenoid compounds present in plants. The sequence is that of 3-hydroxy-3-methylglutaryl-coenzyme A reductase 2 (HMG2) from Solanum lycopersicum (Tomato).